Reading from the N-terminus, the 515-residue chain is Glucose-6-phosphate 1-dehydrogenase (515 aa).

A2 is subject to N-acetylalanine. Residue S8 is modified to Phosphoserine. T10 carries the phosphothreonine modification. An NADP(+)-binding site is contributed by 38 to 45 (GASGDLAK). Position 89 is an N6-acetyllysine (K89). The NADP(+) site is built by Y147 and K171. D-glucose 6-phosphate-binding positions include K171, 201 to 205 (HYLGK), E239, and E258. K171 is modified (N6-(2-hydroxyisobutyryl)lysine; alternate). Position 171 is an N6-acetyllysine; alternate (K171). NADP(+) is bound at residue R357. Residues K360 and R365 each coordinate D-glucose 6-phosphate. K366, R370, and R393 together coordinate NADP(+). Q395 contributes to the D-glucose 6-phosphate binding site. Residues 401–403 (YTK) and 421–423 (DLT) each bind NADP(+). At K403 the chain carries N6-acetyllysine. K432 is subject to N6-acetyllysine. R487 contributes to the NADP(+) binding site. K497 is modified (N6-acetyllysine). Y503 and W509 together coordinate NADP(+). Y503 bears the Phosphotyrosine mark.

This sequence belongs to the glucose-6-phosphate dehydrogenase family. As to quaternary structure, homotetramer; dimer of dimers. Interacts with SIRT2; the interaction is enhanced by H(2)O(2) treatment. Forms a ternary complex with ALDOB and TP53; this interaction is direct. ALDOB stabilizes the complex inhibiting G6PD activity and keeping oxidative pentose phosphate metabolism in check. In terms of processing, acetylated by ELP3 at Lys-403; acetylation inhibits its homodimerization and enzyme activity. Deacetylated by SIRT2 at Lys-403; deacetylation stimulates its enzyme activity.

It localises to the cytoplasm. The protein localises to the cytosol. The protein resides in the membrane. The catalysed reaction is D-glucose 6-phosphate + NADP(+) = 6-phospho-D-glucono-1,5-lactone + NADPH + H(+). It participates in carbohydrate degradation; pentose phosphate pathway; D-ribulose 5-phosphate from D-glucose 6-phosphate (oxidative stage): step 1/3. Functionally, cytosolic glucose-6-phosphate dehydrogenase that catalyzes the first and rate-limiting step of the oxidative branch within the pentose phosphate pathway/shunt, an alternative route to glycolysis for the dissimilation of carbohydrates and a major source of reducing power and metabolic intermediates for fatty acid and nucleic acid biosynthetic processes. The polypeptide is Glucose-6-phosphate 1-dehydrogenase (G6PD) (Bos indicus (Zebu)).